The following is a 93-amino-acid chain: Histone H2B (93 aa).

A compositionally biased stretch (low complexity) spans 1–12 (MPEPAKSAPAPK). Positions 1-31 (MPEPAKSAPAPKKGSKKAVTKTQKKGDKKRX) are disordered. N6-acetyllysine occurs at positions 6 and 13. The span at 13–28 (KGSKKAVTKTQKKGDK) shows a compositional bias: basic residues. Residue Ser15 is modified to Phosphoserine. N6-acetyllysine occurs at positions 16 and 21.

The protein belongs to the histone H2B family. As to quaternary structure, the nucleosome is a histone octamer containing two molecules each of H2A, H2B, H3 and H4 assembled in one H3-H4 heterotetramer and two H2A-H2B heterodimers. The octamer wraps approximately 147 bp of DNA. Monoubiquitination at the C-terminal Lys gives a specific tag for epigenetic transcriptional activation and is also prerequisite for histone H3 'Lys-4' and 'Lys-79' methylation. In terms of processing, phosphorylated on Ser-15 during apoptosis; which facilitates apoptotic chromatin condensation.

It is found in the nucleus. The protein localises to the chromosome. Its function is as follows. Core component of nucleosome. Nucleosomes wrap and compact DNA into chromatin, limiting DNA accessibility to the cellular machineries which require DNA as a template. Histones thereby play a central role in transcription regulation, DNA repair, DNA replication and chromosomal stability. DNA accessibility is regulated via a complex set of post-translational modifications of histones, also called histone code, and nucleosome remodeling. This Crocodylus niloticus (Nile crocodile) protein is Histone H2B.